The sequence spans 476 residues: Replication factor C large subunit (476 aa).

Position 43-50 (43-50 (GKPGIGKT)) interacts with ATP. A disordered region spans residues 435–476 (LEALRMQEPPVPETPPAAEEQPLEEPQEEKKLAPKQATLDFF).

Belongs to the activator 1 small subunits family. RfcL subfamily. In terms of assembly, heteromultimer composed of small subunits (RfcS) and large subunits (RfcL).

Its function is as follows. Part of the RFC clamp loader complex which loads the PCNA sliding clamp onto DNA. The chain is Replication factor C large subunit from Methanocorpusculum labreanum (strain ATCC 43576 / DSM 4855 / Z).